The following is a 431-amino-acid chain: tRNA(Ile)-lysidine synthase (431 aa).

25–30 (SGGLDS) is an ATP binding site.

The protein belongs to the tRNA(Ile)-lysidine synthase family.

The protein resides in the cytoplasm. The catalysed reaction is cytidine(34) in tRNA(Ile2) + L-lysine + ATP = lysidine(34) in tRNA(Ile2) + AMP + diphosphate + H(+). Its function is as follows. Ligates lysine onto the cytidine present at position 34 of the AUA codon-specific tRNA(Ile) that contains the anticodon CAU, in an ATP-dependent manner. Cytidine is converted to lysidine, thus changing the amino acid specificity of the tRNA from methionine to isoleucine. The sequence is that of tRNA(Ile)-lysidine synthase from Legionella pneumophila (strain Paris).